Consider the following 1267-residue polypeptide: BOS complex subunit NOMO2 (1267 aa).

The first 31 residues, 1 to 31 (MLVGQGAGLLGPAVVTAAVVLLLSGVGPAHG), serve as a signal peptide directing secretion. Residues 32-1155 (SEDIVVGCGG…NPTRKLPEQD (1124 aa)) are Lumenal-facing. Residues N50, N218, and N618 are each glycosylated (N-linked (GlcNAc...) asparagine). Residues 1156-1176 (IAQGSYIALPLTLLVLLAGYN) traverse the membrane as a helical segment. The Cytoplasmic portion of the chain corresponds to 1177–1267 (HDKLIPLLLQ…LETTATCIHY (91 aa)). Residues 1198 to 1219 (GQAASDNSGPEDAKRQAKKQKT) form a disordered region.

As to quaternary structure, component of the back of Sec61 (BOS) complex, composed of NCLN/Nicalin, NOMO (NOMO1, NOMO2 or NOMO3) and TMEM147. The BOS complex is part of the multi-pass translocon (MPT) complex, composed of three subcomplexes, the GEL complex (composed of RAB5IF/OPTI and TMCO1), the BOS complex (composed of NCLN/Nicalin, NOMO and TMEM147) and the PAT complex (composed of WDR83OS/Asterix and CCDC47). The MPT complex associates with the SEC61 complex. Due to the strong similarity between NOMO1, NOMO2 and NOMO3, similar interaction pattern probably occur for the three gene copies. As to expression, highly expressed in pancreas and skeletal muscle and, at lower levels, in heart.

It localises to the endoplasmic reticulum membrane. In terms of biological role, component of the multi-pass translocon (MPT) complex that mediates insertion of multi-pass membrane proteins into the lipid bilayer of membranes. The MPT complex takes over after the SEC61 complex: following membrane insertion of the first few transmembrane segments of proteins by the SEC61 complex, the MPT complex occludes the lateral gate of the SEC61 complex to promote insertion of subsequent transmembrane regions. The chain is BOS complex subunit NOMO2 (NOMO2) from Homo sapiens (Human).